We begin with the raw amino-acid sequence, 673 residues long: Elongation factor G 1 (673 aa).

The 275-residue stretch at 3-277 (KELRNIGIIA…SIVDYLPSPL (275 aa)) folds into the tr-type G domain. Residues 12–19 (AHIDAGKT), 76–80 (DTPGH), and 130–133 (NKMD) each bind GTP.

Belongs to the TRAFAC class translation factor GTPase superfamily. Classic translation factor GTPase family. EF-G/EF-2 subfamily.

The protein resides in the cytoplasm. Catalyzes the GTP-dependent ribosomal translocation step during translation elongation. During this step, the ribosome changes from the pre-translocational (PRE) to the post-translocational (POST) state as the newly formed A-site-bound peptidyl-tRNA and P-site-bound deacylated tRNA move to the P and E sites, respectively. Catalyzes the coordinated movement of the two tRNA molecules, the mRNA and conformational changes in the ribosome. This chain is Elongation factor G 1, found in Syntrophomonas wolfei subsp. wolfei (strain DSM 2245B / Goettingen).